The following is a 219-amino-acid chain: Orotate phosphoribosyltransferase (219 aa).

K26 lines the 5-phospho-alpha-D-ribose 1-diphosphate pocket. 34-35 (FF) contributes to the orotate binding site. Residues 72-73 (YK), R98, K99, K102, H104, and 124-132 (DDVITAGTA) contribute to the 5-phospho-alpha-D-ribose 1-diphosphate site. Orotate contacts are provided by T128 and R156.

This sequence belongs to the purine/pyrimidine phosphoribosyltransferase family. PyrE subfamily. Homodimer. Mg(2+) serves as cofactor.

It carries out the reaction orotidine 5'-phosphate + diphosphate = orotate + 5-phospho-alpha-D-ribose 1-diphosphate. The protein operates within pyrimidine metabolism; UMP biosynthesis via de novo pathway; UMP from orotate: step 1/2. Its function is as follows. Catalyzes the transfer of a ribosyl phosphate group from 5-phosphoribose 1-diphosphate to orotate, leading to the formation of orotidine monophosphate (OMP). The polypeptide is Orotate phosphoribosyltransferase (Xanthomonas campestris pv. campestris (strain 8004)).